Reading from the N-terminus, the 215-residue chain is Orotate phosphoribosyltransferase (215 aa).

Lys-26 provides a ligand contact to 5-phospho-alpha-D-ribose 1-diphosphate. Residue 34-35 coordinates orotate; it reads FF. Residues 72–73, Arg-99, Lys-100, Lys-103, His-105, and 124–132 each bind 5-phospho-alpha-D-ribose 1-diphosphate; these read YK and DDVITAGTA. Residues Thr-128 and Arg-156 each contribute to the orotate site.

The protein belongs to the purine/pyrimidine phosphoribosyltransferase family. PyrE subfamily. Homodimer. It depends on Mg(2+) as a cofactor.

It catalyses the reaction orotidine 5'-phosphate + diphosphate = orotate + 5-phospho-alpha-D-ribose 1-diphosphate. It functions in the pathway pyrimidine metabolism; UMP biosynthesis via de novo pathway; UMP from orotate: step 1/2. Catalyzes the transfer of a ribosyl phosphate group from 5-phosphoribose 1-diphosphate to orotate, leading to the formation of orotidine monophosphate (OMP). The polypeptide is Orotate phosphoribosyltransferase (Stutzerimonas stutzeri (strain A1501) (Pseudomonas stutzeri)).